The following is a 165-amino-acid chain: Glutamyl-tRNA(Gln) amidotransferase subunit F, mitochondrial (165 aa).

The N-terminal 19 residues, 1–19 (MKSILRSTTRNLITSSRRF), are a transit peptide targeting the mitochondrion.

The protein belongs to the GatF family. In terms of assembly, subunit of the heterotrimeric GatFAB amidotransferase (AdT) complex, composed of A, B and F subunits.

The protein localises to the mitochondrion inner membrane. It catalyses the reaction L-glutamyl-tRNA(Gln) + L-glutamine + ATP + H2O = L-glutaminyl-tRNA(Gln) + L-glutamate + ADP + phosphate + H(+). Functionally, allows the formation of correctly charged Gln-tRNA(Gln) through the transamidation of misacylated Glu-tRNA(Gln) in the mitochondria. The reaction takes place in the presence of glutamine and ATP through an activated gamma-phospho-Glu-tRNA(Gln). Required for proper protein synthesis within the mitochondrion. This is Glutamyl-tRNA(Gln) amidotransferase subunit F, mitochondrial from Candida albicans (strain SC5314 / ATCC MYA-2876) (Yeast).